The following is a 105-amino-acid chain: uncharacterized protein (105 aa).

The interval 1 to 27 is disordered; it reads MQSPAMKRIKSSSHSRWDGSGSVNEMP.

The protein localises to the mitochondrion. This is an uncharacterized protein from Arabidopsis thaliana (Mouse-ear cress).